Consider the following 179-residue polypeptide: Fimbrial subunit ElfA (179 aa).

Positions 1–21 (MKKSVLTAFITVVCATSSVMA) are cleaved as a signal peptide.

This sequence belongs to the fimbrial protein family.

It is found in the fimbrium. Functionally, part of the elfADCG-ycbUVF fimbrial operon, which promotes adhesion of bacteria to different abiotic surfaces. ElfA is the major fimbrial subunit produced by this operon. In Escherichia coli (strain K12), this protein is Fimbrial subunit ElfA (elfA).